Reading from the N-terminus, the 236-residue chain is tRNA1(Val) (adenine(37)-N6)-methyltransferase (236 aa).

This sequence belongs to the methyltransferase superfamily. tRNA (adenine-N(6)-)-methyltransferase family.

It localises to the cytoplasm. It catalyses the reaction adenosine(37) in tRNA1(Val) + S-adenosyl-L-methionine = N(6)-methyladenosine(37) in tRNA1(Val) + S-adenosyl-L-homocysteine + H(+). Its function is as follows. Specifically methylates the adenine in position 37 of tRNA(1)(Val) (anticodon cmo5UAC). In Shewanella sp. (strain MR-7), this protein is tRNA1(Val) (adenine(37)-N6)-methyltransferase.